A 173-amino-acid chain; its full sequence is Large ribosomal subunit protein uL10 (173 aa).

The protein belongs to the universal ribosomal protein uL10 family. Part of the ribosomal stalk of the 50S ribosomal subunit. The N-terminus interacts with L11 and the large rRNA to form the base of the stalk. The C-terminus forms an elongated spine to which L12 dimers bind in a sequential fashion forming a multimeric L10(L12)X complex.

In terms of biological role, forms part of the ribosomal stalk, playing a central role in the interaction of the ribosome with GTP-bound translation factors. The protein is Large ribosomal subunit protein uL10 of Geobacter sp. (strain M21).